Consider the following 381-residue polypeptide: tRNA-specific 2-thiouridylase MnmA (381 aa).

Residues 14–21 (AMSGGVDS) and Met40 contribute to the ATP site. The active-site Nucleophile is the Cys108. Cys108 and Cys205 are oxidised to a cystine. Gly132 serves as a coordination point for ATP. The tract at residues 155 to 157 (KDQ) is interaction with tRNA. Cys205 functions as the Cysteine persulfide intermediate in the catalytic mechanism. An interaction with tRNA region spans residues 309 to 310 (RY).

The protein belongs to the MnmA/TRMU family.

It localises to the cytoplasm. The catalysed reaction is S-sulfanyl-L-cysteinyl-[protein] + uridine(34) in tRNA + AH2 + ATP = 2-thiouridine(34) in tRNA + L-cysteinyl-[protein] + A + AMP + diphosphate + H(+). In terms of biological role, catalyzes the 2-thiolation of uridine at the wobble position (U34) of tRNA, leading to the formation of s(2)U34. This chain is tRNA-specific 2-thiouridylase MnmA, found in Deinococcus geothermalis (strain DSM 11300 / CIP 105573 / AG-3a).